The sequence spans 298 residues: ADP-ribosyl cyclase/cyclic ADP-ribose hydrolase 1 (298 aa).

Residues 1–21 (MPDYEFSPASGDRPRSWISKQ) lie on the Cytoplasmic side of the membrane. Residues 22–42 (VLIVLGVCLPVILALAIWVGV) form a helical; Signal-anchor for type II membrane protein membrane-spanning segment. At 43 to 298 (LTWRQSSMGA…PEHPSCSVLM (256 aa)) the chain is on the extracellular side. Cystine bridges form between Cys64–Cys80, Cys97–Cys178, and Cys158–Cys171. A glycan (N-linked (GlcNAc...) asparagine) is linked at Asn98. Cys117 is an active-site residue. N-linked (GlcNAc...) asparagine glycosylation occurs at Asn118. An N-linked (GlcNAc...) asparagine glycan is attached at Asn177. Cys199 is a catalytic residue. N-linked (GlcNAc...) asparagine glycans are attached at residues Asn207 and Asn268. 2 cysteine pairs are disulfide-bonded: Cys252–Cys273 and Cys285–Cys294.

The protein belongs to the ADP-ribosyl cyclase family. Homodimer. Osteoclasts.

It localises to the cell membrane. Its subcellular location is the microsome membrane. The protein localises to the endoplasmic reticulum membrane. It catalyses the reaction NAD(+) = cyclic ADP-beta-D-ribose + nicotinamide + H(+). The catalysed reaction is 2'-phospho-cyclic ADP-ribose + nicotinate = nicotinate-adenine dinucleotide phosphate. It carries out the reaction NAD(+) + H2O = ADP-D-ribose + nicotinamide + H(+). The enzyme catalyses nicotinate + NADP(+) = nicotinate-adenine dinucleotide phosphate + nicotinamide. Synthesizes cyclic ADP-ribose (cADPR), a second messenger for glucose-induced insulin secretion. Synthesizes the Ca(2+) mobilizer nicotinate-adenine dinucleotide phosphate, NAADP(+), from 2'-phospho-cADPR and nicotinic acid, as well as from NADP(+) and nicotinic acid. Also has cADPR hydrolase activity. The polypeptide is ADP-ribosyl cyclase/cyclic ADP-ribose hydrolase 1 (CD38) (Oryctolagus cuniculus (Rabbit)).